Reading from the N-terminus, the 429-residue chain is Adenylosuccinate synthetase (429 aa).

GTP contacts are provided by residues 12 to 18 (GDEGKGK) and 40 to 42 (GHT). Catalysis depends on Asp13, which acts as the Proton acceptor. Residues Asp13 and Gly40 each contribute to the Mg(2+) site. IMP contacts are provided by residues 13-16 (DEGK), 38-41 (NAGH), Thr129, Arg143, Gln223, Thr238, and Arg302. His41 functions as the Proton donor in the catalytic mechanism. 298 to 304 (VVTGRKR) contributes to the substrate binding site. Residues Arg304, 330–332 (KLD), and 412–414 (STS) each bind GTP.

This sequence belongs to the adenylosuccinate synthetase family. Homodimer. Requires Mg(2+) as cofactor.

The protein localises to the cytoplasm. It catalyses the reaction IMP + L-aspartate + GTP = N(6)-(1,2-dicarboxyethyl)-AMP + GDP + phosphate + 2 H(+). It functions in the pathway purine metabolism; AMP biosynthesis via de novo pathway; AMP from IMP: step 1/2. In terms of biological role, plays an important role in the de novo pathway of purine nucleotide biosynthesis. Catalyzes the first committed step in the biosynthesis of AMP from IMP. This Brucella ovis (strain ATCC 25840 / 63/290 / NCTC 10512) protein is Adenylosuccinate synthetase.